The following is a 405-amino-acid chain: Argininosuccinate synthase (405 aa).

Residues 10 to 18 (AYSGGLDTS) and Ala37 each bind ATP. L-citrulline contacts are provided by Tyr88 and Ser93. Gly118 is a binding site for ATP. L-aspartate is bound by residues Thr120, Asn124, and Asp125. Residue Asn124 participates in L-citrulline binding. Residues Arg128, Ser177, Ser186, Glu263, and Tyr275 each coordinate L-citrulline.

The protein belongs to the argininosuccinate synthase family. Type 1 subfamily. Homotetramer.

The protein localises to the cytoplasm. The catalysed reaction is L-citrulline + L-aspartate + ATP = 2-(N(omega)-L-arginino)succinate + AMP + diphosphate + H(+). Its pathway is amino-acid biosynthesis; L-arginine biosynthesis; L-arginine from L-ornithine and carbamoyl phosphate: step 2/3. The protein is Argininosuccinate synthase of Acetivibrio thermocellus (strain ATCC 27405 / DSM 1237 / JCM 9322 / NBRC 103400 / NCIMB 10682 / NRRL B-4536 / VPI 7372) (Clostridium thermocellum).